An 863-amino-acid chain; its full sequence is Autotaxin (863 aa).

A signal peptide spans M1–G27. The propeptide at F28–R35 is removed by furin. N54 carries an N-linked (GlcNAc...) asparagine glycan. 2 consecutive SMB domains span residues I55–A98 and R99–H143. 10 disulfide bridges follow: C59–C76, C63–C94, C74–C87, C80–C86, C103–C120, C108–C138, C118–C131, C124–C130, C149–C195, and C157–C351. The Cell attachment site signature appears at R127–D129. Residues V145 to P502 are phosphodiesterase. Zn(2+) contacts are provided by D172 and T210. T210 serves as the catalytic Nucleophile. 1-(9Z-octadecenoyl)-sn-glycero-3-phosphate-binding residues include T210, N231, and D312. T210, N231, and D312 together coordinate 1-hexadecanoyl-sn-glycero-3-phosphate. 1-tetradecanoyl-sn-glycerol 3-phosphate-binding residues include T210, N231, and D312. Zn(2+) contacts are provided by D312, H316, D359, and H360. Disulfide bonds link C367-C469, C414-C806, C567-C667, C569-C652, and C775-C785. Residue N411 is glycosylated (N-linked (GlcNAc...) asparagine). H475 provides a ligand contact to Zn(2+). H475 contacts 1-(9Z-octadecenoyl)-sn-glycero-3-phosphate. H475 provides a ligand contact to 1-hexadecanoyl-sn-glycero-3-phosphate. H475 provides a ligand contact to 1-tetradecanoyl-sn-glycerol 3-phosphate. A glycan (N-linked (GlcNAc...) asparagine) is linked at N525. Residues L598–I863 form a nuclease-like domain region. Residues D740, D742, D744, L746, and D748 each coordinate Ca(2+). N807 carries N-linked (GlcNAc...) asparagine glycosylation. The interval I830 to T851 is required for secretion.

Belongs to the nucleotide pyrophosphatase/phosphodiesterase family. The cofactor is Zn(2+). Ca(2+) serves as cofactor. N-glycosylation, but not furin-cleavage, plays a critical role on secretion and on lysoPLD activity. Post-translationally, the interdomain disulfide bond between Cys-414 and Cys-806 is essential for catalytic activity. In terms of tissue distribution, detected in blood plasma (at protein level). Predominantly expressed in brain, placenta, ovary, and small intestine. Expressed in a number of carcinomas such as hepatocellular and prostate carcinoma, neuroblastoma and non-small-cell lung cancer. Expressed in body fluids such as plasma, cerebral spinal fluid (CSF), saliva, follicular and amniotic fluids. Not detected in leukocytes. Isoform 1 is more highly expressed in peripheral tissues than in the central nervous system (CNS). Adipocytes only express isoform 1. Isoform 3 is more highly expressed in the brain than in peripheral tissues.

The protein resides in the secreted. It carries out the reaction a 1-O-alkyl-sn-glycero-3-phosphoethanolamine + H2O = a 1-O-alkyl-sn-glycero-3-phosphate + ethanolamine + H(+). It catalyses the reaction a 1-acyl-sn-glycero-3-phosphoethanolamine + H2O = a 1-acyl-sn-glycero-3-phosphate + ethanolamine + H(+). The catalysed reaction is 1-(9Z-octadecenoyl)-sn-glycero-3-phosphoethanolamine + H2O = 1-(9Z-octadecenoyl)-sn-glycero-3-phosphate + ethanolamine + H(+). The enzyme catalyses a 1-O-alkyl-sn-glycero-3-phosphocholine + H2O = a 1-O-alkyl-sn-glycero-3-phosphate + choline + H(+). It carries out the reaction 1-O-(9Z-octadecenyl)-sn-glycero-3-phosphocholine + H2O = 1-O-(9Z-octadecenyl)-sn-glycero-3-phosphate + choline + H(+). It catalyses the reaction 1-O-hexadecyl-sn-glycero-3-phosphocholine + H2O = 1-O-hexadecyl-sn-glycero-3-phosphate + choline + H(+). The catalysed reaction is a 1-O-(1Z-alkenyl)-sn-glycero-3-phosphocholine + H2O = a 1-O-(1Z-alkenyl)-sn-glycero-3-phosphate + choline + H(+). The enzyme catalyses a 1-acyl-sn-glycero-3-phosphocholine + H2O = a 1-acyl-sn-glycero-3-phosphate + choline + H(+). It carries out the reaction 1-dodecanoyl-sn-glycero-3-phosphocholine + H2O = 1-dodecanoyl-sn-glycerol 3-phosphate + choline + H(+). It catalyses the reaction 1-(9Z-octadecenoyl)-sn-glycero-3-phosphocholine + H2O = 1-(9Z-octadecenoyl)-sn-glycero-3-phosphate + choline + H(+). The catalysed reaction is 1-tetradecanoyl-sn-glycero-3-phosphocholine + H2O = 1-tetradecanoyl-sn-glycerol 3-phosphate + choline + H(+). The enzyme catalyses 1-decanoyl-sn-glycero-3-phosphocholine + H2O = 1-decanoyl-sn-glycero-3-phosphate + choline + H(+). It carries out the reaction 1-octadecanoyl-sn-glycero-3-phosphocholine + H2O = 1-octadecanoyl-sn-glycero-3-phosphate + choline + H(+). It catalyses the reaction 1-hexadecanoyl-sn-glycero-3-phosphocholine + H2O = 1-hexadecanoyl-sn-glycero-3-phosphate + choline + H(+). The catalysed reaction is 1-hexanoyl-sn-glycero-3-phosphocholine + H2O = 1-hexanoyl-sn-glycero-3-phosphate + choline + H(+). The enzyme catalyses 1-(9Z,12Z)-octadecadienoyl-sn-glycero-3-phosphocholine + H2O = 1-(9Z,12Z)-octadecadienoyl-sn-glycero-3-phosphate + choline + H(+). It carries out the reaction sphing-4-enine-phosphocholine + H2O = sphing-4-enine 1-phosphate + choline + H(+). It catalyses the reaction 1-(5Z,8Z,11Z,14Z-eicosatetraenoyl)-sn-glycero-3-phosphocholine + H2O = 1-(5Z,8Z,11Z,14Z-eicosatetraenoyl)-sn-glycero-3-phosphate + choline + H(+). The catalysed reaction is a 2-acyl-sn-glycero-3-phosphocholine + H2O = a 2-acyl-sn-glycerol 3-phosphate + choline + H(+). The enzyme catalyses a 1,2-diacyl-sn-glycero-3-phosphocholine + H2O = a 1,2-diacyl-sn-glycero-3-phosphate + choline + H(+). It carries out the reaction 1,2-dioctanoyl-sn-glycero-3-phosphocholine + H2O = 1,2-dioctanoyl-sn-glycero-3-phosphate + choline + H(+). It catalyses the reaction 1,2-didecanoyl-sn-glycero-3-phosphocholine + H2O = 1,2-didecanoyl-sn-glycero-3-phosphate + choline + H(+). The catalysed reaction is a 1-acyl-sn-glycero-3-phospho-L-serine + H2O = a 1-acyl-sn-glycero-3-phosphate + L-serine + H(+). The enzyme catalyses 1-(9Z-octadecenoyl)-sn-glycero-3-phospho-L-serine + H2O = 1-(9Z-octadecenoyl)-sn-glycero-3-phosphate + L-serine + H(+). It carries out the reaction a 2-acyl-sn-glycero-3-phospho-L-serine + H2O = a 2-acyl-sn-glycerol 3-phosphate + L-serine + H(+). With respect to regulation, inhibited by lysophosphatidic acid (LPA) and sphingosine-1-phosphate (S1P). Inhibited by EDTA and EGTA. Secreted lysophospholipase D that hydrolyzes lysophospholipids to produce the signaling molecule lysophosphatidic acid (LPA) in extracellular fluids. Its major substrate is lysophosphatidylcholine. Can also act on sphingosylphosphorylcholine producing sphingosine-1-phosphate, a modulator of cell motility. Can hydrolyze, in vitro, bis-pNPP, to some extent pNP-TMP, and barely ATP. Involved in several motility-related processes such as angiogenesis and neurite outgrowth. Acts as an angiogenic factor by stimulating migration of smooth muscle cells and microtubule formation. Stimulates migration of melanoma cells, probably via a pertussis toxin-sensitive G protein. May have a role in induction of parturition. Possible involvement in cell proliferation and adipose tissue development. Required for LPA production in activated platelets, cleaves the sn-1 lysophospholipids to generate sn-1 lysophosphatidic acids containing predominantly 18:2 and 20:4 fatty acids. Shows a preference for the sn-1 to the sn-2 isomer of 1-O-alkyl-sn-glycero-3-phosphocholine (lyso-PAF). This chain is Autotaxin, found in Homo sapiens (Human).